We begin with the raw amino-acid sequence, 517 residues long: Crotonobetaine/carnitine--CoA ligase (517 aa).

Belongs to the ATP-dependent AMP-binding enzyme family.

It catalyses the reaction 4-(trimethylamino)butanoate + ATP + CoA = 4-(trimethylamino)butanoyl-CoA + AMP + diphosphate. The catalysed reaction is crotonobetaine + ATP + CoA = crotonobetainyl-CoA + AMP + diphosphate. It carries out the reaction (R)-carnitine + ATP + CoA = (R)-carnitinyl-CoA + AMP + diphosphate. The protein operates within amine and polyamine metabolism; carnitine metabolism. In terms of biological role, catalyzes the transfer of CoA to carnitine, generating the initial carnitinyl-CoA needed for the CaiB reaction cycle. Also has activity toward crotonobetaine and gamma-butyrobetaine. The polypeptide is Crotonobetaine/carnitine--CoA ligase (Escherichia coli O45:K1 (strain S88 / ExPEC)).